Reading from the N-terminus, the 110-residue chain is Large ribosomal subunit protein uL22 (110 aa).

Belongs to the universal ribosomal protein uL22 family. Part of the 50S ribosomal subunit.

This protein binds specifically to 23S rRNA; its binding is stimulated by other ribosomal proteins, e.g. L4, L17, and L20. It is important during the early stages of 50S assembly. It makes multiple contacts with different domains of the 23S rRNA in the assembled 50S subunit and ribosome. Functionally, the globular domain of the protein is located near the polypeptide exit tunnel on the outside of the subunit, while an extended beta-hairpin is found that lines the wall of the exit tunnel in the center of the 70S ribosome. In Citrobacter koseri (strain ATCC BAA-895 / CDC 4225-83 / SGSC4696), this protein is Large ribosomal subunit protein uL22.